A 403-amino-acid polypeptide reads, in one-letter code: Calcium-responsive transactivator (403 aa).

The N-terminal auto-inhibitory domain stretch occupies residues 1–148 (MSVAFASARP…TLPTTTMSMA (148 aa)). Residues 50-53 (YQQI) carry the SH2-binding motif. 4 disordered regions span residues 72-111 (QSLL…ALGS), 152-171 (HGSA…VPMQ), 224-303 (NQSS…RTFE), and 318-403 (SQQQ…NYQQ). 2 stretches are compositionally biased toward polar residues: residues 92 to 105 (QTGP…QGNL) and 161 to 171 (TVPSSQNVPMQ). A methionine-rich intra-molecular domain region spans residues 149–238 (VSTHGSAPGY…GSSMMGQRPL (90 aa)). Residues 224–235 (NQSSQGSSMMGQ) show a composition bias toward low complexity. Residues 252 to 324 (YLGQEEYYSE…AQYSQQQTGY (73 aa)) are MFD domain. A compositionally biased stretch (polar residues) spans 263–277 (YGHSQGSSEAMTPQY). Residues 286-296 (YSYQQSSYGEQ) show a composition bias toward low complexity. The segment at 341–403 (NQQNYPGQQQ…EQGQYGNYQQ (63 aa)) is necessary for nuclear localization. An SH2-binding motif is present at residues 360-363 (SQYS). The SH3-binding signature appears at 378–386 (TSQTTSTAQ). Positions 398-401 (YGNY) match the SH2-binding motif.

The protein belongs to the SS18 family. In terms of assembly, homodimer.

The protein resides in the nucleus. Its function is as follows. Transcriptional activator which may be required for calcium-dependent dendritic growth and branching in cortical neurons. This is Calcium-responsive transactivator (ss18l1) from Xenopus laevis (African clawed frog).